A 619-amino-acid polypeptide reads, in one-letter code: Xyloglucan galactosyltransferase MUR3 (619 aa).

The disordered stretch occupies residues 1–26; the sequence is MFPRVSMRRRSAEVSPTEPMEKGNGK. At 1-33 the chain is on the cytoplasmic side; it reads MFPRVSMRRRSAEVSPTEPMEKGNGKNQTNRIC. A helical; Signal-anchor for type II membrane protein transmembrane segment spans residues 34-54; it reads LLVALSLFFWALLLYFHFVVL. Residues 55 to 619 are Lumenal-facing; that stretch reads GTSNIDKQLQ…WKSEQRDKTQ (565 aa). 7 N-linked (GlcNAc...) asparagine glycosylation sites follow: asparagine 116, asparagine 146, asparagine 231, asparagine 257, asparagine 319, asparagine 465, and asparagine 482. The disordered stretch occupies residues 576 to 619; sequence HVWDPFFSKPKPGEDGSSDGNGGTTISADAAKNSWKSEQRDKTQ. A compositionally biased stretch (basic and acidic residues) spans 610–619; it reads WKSEQRDKTQ.

This sequence belongs to the glycosyltransferase 47 family. As to quaternary structure, interacts with CSLC4 and FUT1. As to expression, ubiquitous.

It localises to the golgi apparatus. The protein localises to the golgi stack membrane. The protein resides in the golgi apparatus membrane. In terms of biological role, involved in the attachment of the Gal residue on the third xylosyl unit within the XXXG core structure of xyloglucan, the principal glycan that interlaces the cellulose microfibrils in plant cell wall. Associates with other xyloglucan-synthesizing enzymes to form multiprotein complexes for xyloglucan synthesis in the Golgi. Interacts with actin and is required for the proper endomembrane organization and for the cell elongation. Not involved in the trafficking from the endoplasmic reticulum to the vacuoles. Involved in salt stress tolerance. Participates in the control of the expression of genes encoding for proteins involved in reactive oxygen species (ROS) detoxification under salt stress. May contribute to the maintenance of the proper organization of actin microfilaments during salt stress-induced ROS production. The protein is Xyloglucan galactosyltransferase MUR3 of Arabidopsis thaliana (Mouse-ear cress).